The chain runs to 187 residues: Large ribosomal subunit protein eL18B (187 aa).

Thr134 carries the phosphothreonine modification. Ser136 is modified (phosphoserine).

The protein belongs to the eukaryotic ribosomal protein eL18 family. Component of the large ribosomal subunit (LSU). Mature yeast ribosomes consist of a small (40S) and a large (60S) subunit. The 40S small subunit contains 1 molecule of ribosomal RNA (18S rRNA) and at least 33 different proteins. The large 60S subunit contains 3 rRNA molecules (25S, 5.8S and 5S rRNA) and at least 46 different proteins. eL18 interacts with NAP1.

The protein resides in the cytoplasm. Component of the ribosome, a large ribonucleoprotein complex responsible for the synthesis of proteins in the cell. The small ribosomal subunit (SSU) binds messenger RNAs (mRNAs) and translates the encoded message by selecting cognate aminoacyl-transfer RNA (tRNA) molecules. The large subunit (LSU) contains the ribosomal catalytic site termed the peptidyl transferase center (PTC), which catalyzes the formation of peptide bonds, thereby polymerizing the amino acids delivered by tRNAs into a polypeptide chain. The nascent polypeptides leave the ribosome through a tunnel in the LSU and interact with protein factors that function in enzymatic processing, targeting, and the membrane insertion of nascent chains at the exit of the ribosomal tunnel. The sequence is that of Large ribosomal subunit protein eL18B (rpl1802) from Schizosaccharomyces pombe (strain 972 / ATCC 24843) (Fission yeast).